The sequence spans 406 residues: Tryptophan synthase beta chain (406 aa).

Lys99 carries the N6-(pyridoxal phosphate)lysine modification.

It belongs to the TrpB family. As to quaternary structure, tetramer of two alpha and two beta chains. The cofactor is pyridoxal 5'-phosphate.

The enzyme catalyses (1S,2R)-1-C-(indol-3-yl)glycerol 3-phosphate + L-serine = D-glyceraldehyde 3-phosphate + L-tryptophan + H2O. Its pathway is amino-acid biosynthesis; L-tryptophan biosynthesis; L-tryptophan from chorismate: step 5/5. Functionally, the beta subunit is responsible for the synthesis of L-tryptophan from indole and L-serine. The sequence is that of Tryptophan synthase beta chain from Allorhizobium ampelinum (strain ATCC BAA-846 / DSM 112012 / S4) (Agrobacterium vitis (strain S4)).